A 683-amino-acid chain; its full sequence is Outer dynein arm-docking complex subunit 4 (683 aa).

4 TPR repeats span residues 13 to 46 (FPSYMAEGERLYLCGEFAKAAHSFSNALHLQSGD), 47 to 80 (KNCLVARSKCFLKMGELEKSLEDAEASLQGDPTF), 48 to 80 (NCLVARSKCFLKMGELEKSLEDAEASLQGDPTF), and 81 to 114 (CKGILQKAETLYTMGDFEFALVFYHRGYKLRPDR). Residues 158–179 (QQKPHPVRQLIHHPKRESKRKG) form a disordered region. The segment covering 167–179 (LIHHPKRESKRKG) has biased composition (basic residues). TPR repeat units lie at residues 275–311 (LKSLEDIDMLLTSGSAEGSLQKAEKVLKKVLEWNKEE), 320–353 (GNLYSCIGNAQIELGQMVAALQSHRKDLEIAKEY), 360–393 (SRALDNIGRVFARVGKFQQAIDTWEEKIPLAKTT), 397–430 (TWLFHEIGRCYLELDQAWEAQSYGEKSQQCAEEE), and 437–470 (LNASVLVAQAQVKLRDFESAVNNFEKALERAKLV). 2 disordered regions span residues 510–537 (ENATMLDGQTRTAKEKETRKTKDEPEKV) and 553–683 (VLSK…EPIE). Composition is skewed to basic and acidic residues over residues 521–537 (TAKEKETRKTKDEPEKV), 566–590 (PEQRQREDPEKASWRKELGAKERGP), 602–620 (GRTEQNREETREIYRRPSE), and 629–675 (SSPR…IEKD). A TPR 15 repeat occupies 592–625 (DTAKGQFGEAGRTEQNREETREIYRRPSELDQNL).

In terms of assembly, component of the outer dynein arm-docking complex along with ODAD1, ODAD2 and ODAD3. Interacts with ODAD1; this interaction may facilitate the recruitment and/or attachment of outer dynein arm docking complex proteins, including ODAD1, ODAD3 and ODAD2, to ciliary axonemes. Interacts with components of the IFT complex A, including IFT140, TTC21B/IFT139 and WDR19/IFT144, and the IFT complex B, including IFT46, IFT52 and IFT57. Interacts with CFAP53. Expressed in trachea multiciliated cells.

It localises to the cytoplasm. It is found in the cytoskeleton. Its subcellular location is the cilium axoneme. In terms of biological role, component of the outer dynein arm-docking complex (ODA-DC) that mediates outer dynein arms (ODA) binding onto the doublet microtubule. Plays an essential role for the assembly of ODA-DC and for the docking of ODA in ciliary axoneme. This Bos taurus (Bovine) protein is Outer dynein arm-docking complex subunit 4.